Here is a 286-residue protein sequence, read N- to C-terminus: D-tagatose-1,6-bisphosphate aldolase subunit KbaY (286 aa).

Aspartate 82 serves as the catalytic Proton donor. Zn(2+)-binding residues include histidine 83 and histidine 180. Residue glycine 181 participates in dihydroxyacetone phosphate binding. Position 208 (histidine 208) interacts with Zn(2+). Dihydroxyacetone phosphate-binding positions include 209 to 211 (GAS) and 230 to 233 (NVAT).

Belongs to the class II fructose-bisphosphate aldolase family. TagBP aldolase KbaY subfamily. As to quaternary structure, homotetramer. Forms a complex with KbaZ. Requires Zn(2+) as cofactor.

The catalysed reaction is D-tagatofuranose 1,6-bisphosphate = D-glyceraldehyde 3-phosphate + dihydroxyacetone phosphate. It functions in the pathway carbohydrate metabolism; D-tagatose 6-phosphate degradation; D-glyceraldehyde 3-phosphate and glycerone phosphate from D-tagatose 6-phosphate: step 2/2. Catalytic subunit of the tagatose-1,6-bisphosphate aldolase KbaYZ, which catalyzes the reversible aldol condensation of dihydroxyacetone phosphate (DHAP or glycerone-phosphate) with glyceraldehyde 3-phosphate (G3P) to produce tagatose 1,6-bisphosphate (TBP). Requires KbaZ subunit for full activity and stability. Is involved in the catabolism of N-acetylgalactosamine and D-galactosamine. The chain is D-tagatose-1,6-bisphosphate aldolase subunit KbaY (kbaY) from Escherichia coli.